Reading from the N-terminus, the 95-residue chain is Co-chaperonin GroES (95 aa).

This sequence belongs to the GroES chaperonin family. In terms of assembly, heptamer of 7 subunits arranged in a ring. Interacts with the chaperonin GroEL.

The protein localises to the cytoplasm. In terms of biological role, together with the chaperonin GroEL, plays an essential role in assisting protein folding. The GroEL-GroES system forms a nano-cage that allows encapsulation of the non-native substrate proteins and provides a physical environment optimized to promote and accelerate protein folding. GroES binds to the apical surface of the GroEL ring, thereby capping the opening of the GroEL channel. The polypeptide is Co-chaperonin GroES (Desulforapulum autotrophicum (strain ATCC 43914 / DSM 3382 / VKM B-1955 / HRM2) (Desulfobacterium autotrophicum)).